Consider the following 154-residue polypeptide: MSLATLDATQHPNLPASAATLFKAKAHKKLSFEQIAQHIGRNEVATAALFYGQAKASPEDIQKLSELLNISPQVLEEQLSGFPDRGRSVEMPPKEPLIYRLYEIVQNYGYAYKAVLNEKFGDGIMSAISFSTKVEKETDADGNNWAVITLRGKW.

Catalysis depends on residues arginine 100, glutamate 103, and serine 126.

The protein belongs to the cyanase family.

It catalyses the reaction cyanate + hydrogencarbonate + 3 H(+) = NH4(+) + 2 CO2. Its function is as follows. Catalyzes the reaction of cyanate with bicarbonate to produce ammonia and carbon dioxide. This Aspergillus fumigatus (strain ATCC MYA-4609 / CBS 101355 / FGSC A1100 / Af293) (Neosartorya fumigata) protein is Cyanate hydratase.